The sequence spans 223 residues: Killer cell lectin-like receptor subfamily B member 1A (223 aa).

At 1 to 43 (MDTARVYLSLKPSKTAAGAQCVSPPSLPPDACRCPRSHRLALK) the chain is on the cytoplasmic side. An LCK-binding motif motif is present at residues 32–35 (CRCP). A helical; Signal-anchor for type II membrane protein membrane pass occupies residues 44 to 63 (LSCAGLILLVLALVGMSILV). The Extracellular segment spans residues 64–223 (RVLVQKPSVE…LKCECMCNDS (160 aa)). A C-type lectin domain is found at 93-212 (KCPKDWLSHR…DSDNIWVCQK (120 aa)). Cystine bridges form between Cys-94-Cys-105, Cys-122-Cys-210, and Cys-189-Cys-202.

Homodimer; disulfide-linked. Interacts with tyrosine kinase LCK. Expressed in natural killer cells.

The protein localises to the membrane. In terms of biological role, plays a stimulatory role on natural killer (NK) cell cytotoxicity. In Rattus norvegicus (Rat), this protein is Killer cell lectin-like receptor subfamily B member 1A (Klrb1a).